The primary structure comprises 71 residues: Frenatin 2.3S (71 aa).

Residues 1-22 (MAFLKKSLFLVLFLGLVSLSMG) form the signal peptide. The tract at residues 21–56 (MGEREKREEEEEEEEENKEEEANEEGKGESEEKRGL) is disordered. Residues 23 to 54 (EREKREEEEEEEEENKEEEANEEGKGESEEKR) constitute a propeptide that is removed on maturation. The span at 28 to 43 (EEEEEEEEENKEEEAN) shows a compositional bias: acidic residues. Positions 44 to 55 (EEGKGESEEKRG) are enriched in basic and acidic residues. Glycine amide; in Frenatin 2.1S is present on glycine 70.

It belongs to the frog skin active peptide (FSAP) family. Frenatin subfamily. Post-translationally, frenatin 2.3S is not amidated. As to expression, expressed by the skin glands.

The protein localises to the secreted. Its function is as follows. Antimicrobial peptide with potent activity against Gram-negative bacteria. Shows immunostimulatory actions both in vitro and in vivo. In vitro, is cytotoxic to non-small cell lung adenocarcinoma A549 cells. Also, stimulates production of pro-inflammatory cytokines by mouse peritoneal macrophages and down-regulates production of the anti-inflammatory cytokine IL-10 by lipopolysaccharide (LPS)-stimulated cells. In vivo, intraperitoneal injection in mice enhances the activation state and homing capacity of Th1 type lymphocytes and promotes the recruitment, activation and tumoricidal capacities of peritoneal NK cells. Has a very weak activity in stimulation of insulin release and a weak hemolytic activity. In terms of biological role, antimicrobial peptide with potent activity against some Gram-positive and Gram-negative bacteria. Has a multifunctional mode of action. It displays depolarization and bacterial cell leakage, and can also internalize into bacterial cells and alter specific gene expression involved in bacterial resistance mechanisms. Does not agglutinate bacteria and lipid vesicles, even a high concentrations. Also displays moderate cellular protection against yellow fever virus (YFV)-infected Vero cells without causing significant cytotoxicity. Shows a weak hemolytic activity, and is not cytotoxic to monocytes. Frenatin 2.3S (version without Gly-71) shows no or very weak antibacterial activity, shows no or very weak cytotoxicity to lung adenocarcinoma A549 cells and shows very weak hemolysis. It only stimulates production of pro-inflammatory cytokines IL-23 (but not IL-1beta and TNF-alpha) by mouse peritoneal macrophages and has no effect on the production of the anti-inflammatory cytokine IL-10. Frenatin 2.3S (version without Gly-71) very weakly stimulates insulin release. The protein is Frenatin 2.3S of Sphaenorhynchus lacteus (Orinoco lime treefrog).